The chain runs to 137 residues: Neutral phospholipase A2 ammodytin I2 (137 aa).

Positions 1-16 are cleaved as a signal peptide; sequence MRTLWIVAVCLIGVEG. Intrachain disulfides connect cysteine 42/cysteine 131, cysteine 44/cysteine 60, cysteine 59/cysteine 111, cysteine 65/cysteine 137, cysteine 66/cysteine 104, cysteine 73/cysteine 97, and cysteine 91/cysteine 102. Residues tyrosine 43, glycine 45, and glycine 47 each contribute to the Ca(2+) site. Histidine 63 is an active-site residue. A Ca(2+)-binding site is contributed by aspartate 64. Aspartate 105 is a catalytic residue.

The protein belongs to the phospholipase A2 family. Group II subfamily. D49 sub-subfamily. It depends on Ca(2+) as a cofactor. In terms of tissue distribution, expressed by the venom gland.

It is found in the secreted. The enzyme catalyses a 1,2-diacyl-sn-glycero-3-phosphocholine + H2O = a 1-acyl-sn-glycero-3-phosphocholine + a fatty acid + H(+). Snake venom phospholipase A2 (PLA2) that has enzymatic activity but is non-toxic. Displays low binding affinity and enzymatic activity on phosphatidylserine-containing vesicles and HEK-293 plasma membranes, in contrast to ammodytoxins that have high activity on these phospholipids. PLA2 catalyzes the calcium-dependent hydrolysis of the 2-acyl groups in 3-sn-phosphoglycerides. This chain is Neutral phospholipase A2 ammodytin I2, found in Vipera ammodytes ammodytes (Western sand viper).